A 166-amino-acid polypeptide reads, in one-letter code: Protein SprT (166 aa).

One can recognise a SprT-like domain in the interval 21–160 (ANQHFSREFP…CQQCQQTLAF (140 aa)). His-74 serves as a coordination point for Zn(2+). Residue Glu-75 is part of the active site. His-78 lines the Zn(2+) pocket.

It belongs to the SprT family. Zn(2+) serves as cofactor.

The protein resides in the cytoplasm. This is Protein SprT from Vibrio atlanticus (strain LGP32) (Vibrio splendidus (strain Mel32)).